The chain runs to 129 residues: L-ectoine synthase (129 aa).

Belongs to the ectoine synthase family.

It carries out the reaction (2S)-4-acetamido-2-aminobutanoate = L-ectoine + H2O. It participates in amine and polyamine biosynthesis; ectoine biosynthesis; L-ectoine from L-aspartate 4-semialdehyde: step 3/3. In terms of biological role, catalyzes the circularization of gamma-N-acetyl-alpha,gamma-diaminobutyric acid (ADABA) to ectoine (1,4,5,6-tetrahydro-2-methyl-4-pyrimidine carboxylic acid), which is an excellent osmoprotectant. This is L-ectoine synthase from Marinomonas sp. (strain MWYL1).